The chain runs to 150 residues: UPF0178 protein BceJ2315_16760 (150 aa).

Belongs to the UPF0178 family.

The protein is UPF0178 protein BceJ2315_16760 of Burkholderia cenocepacia (strain ATCC BAA-245 / DSM 16553 / LMG 16656 / NCTC 13227 / J2315 / CF5610) (Burkholderia cepacia (strain J2315)).